The sequence spans 402 residues: mRNA cap guanine-N(7) methyltransferase (402 aa).

A compositionally biased stretch (basic and acidic residues) spans Met1–Val11. The tract at residues Met1–Leu75 is disordered. Residues Pro35–Ser50 show a composition bias toward polar residues. The segment covering Lys55–His72 has biased composition (basic and acidic residues). Residues Ser94–Gln401 enclose the mRNA cap 0 methyltransferase domain. Asn103–Asn104 lines the mRNA pocket. Lys107, Gly131, Asp153, Asp187, Gln210, and Tyr215 together coordinate S-adenosyl-L-methionine.

The protein belongs to the class I-like SAM-binding methyltransferase superfamily. mRNA cap 0 methyltransferase family.

The protein resides in the nucleus. The enzyme catalyses a 5'-end (5'-triphosphoguanosine)-ribonucleoside in mRNA + S-adenosyl-L-methionine = a 5'-end (N(7)-methyl 5'-triphosphoguanosine)-ribonucleoside in mRNA + S-adenosyl-L-homocysteine. In terms of biological role, catalytic subunit of the mRNA-capping methyltransferase RNMT:RAMAC complex that methylates the N7 position of the added guanosine to the 5'-cap structure of mRNAs. Binds RNA containing 5'-terminal GpppC. The sequence is that of mRNA cap guanine-N(7) methyltransferase (rnmt) from Xenopus laevis (African clawed frog).